The primary structure comprises 694 residues: MTHTNEHDHKAEQQQNGRGDTTTETVNPQKMKLVTKLLIDNKFGLMDDLNFSIPLTASSEGVPISAKTSELGTEYLKNQQENSVSPILPISRSTRIKADRVRIYLDYYYNILERCISIDSSQNHHEGVEGVYNPLQVIRNRKLKKKHHELPTREFYTTKHPIIAIKQFSKKPNKKMPWFVDINEKYMDLTWRTSHWEELVDPQGKLWFQSYSPSNESSGSSSSRRHHGHHIHPRRHLQHHSRVRTANSVHSNTQSLTPKRVMTNEEDNNNHNNNNMITKIATTPEAQISRNKKSDLNLSHIHLEVPITNTVTNTSSDQGSLIIEAKGSSYGGDRRGSSNTSGSGGKRNSKHYRSKSAGPPENEKSRMNGLEKIISKTSKGWSRSPKKNTPGLEKQVLLNPTISNGGTSRRSSNNGESISTNSSKSSMGITFGNTETYKTPVDNGKDAIIRQSLLSEVPVHTLRGKTSNRSLRAEGEQALESDKELPNGAGSIYEGAPREKTTSQGSEPVGLVSDSLQVDEQLQRYWHDTRYIMSTVAMMQHRRETHDIVKRREIARRNEIEITQDADTNIRKTADALTQYDNELNKVLKLGNDWTSKLLNDYSIRVETLISSSDRILSDINTTLTLKLKMFQENTERYVTVKVMRAQKMTKTIYRLLEFGIVLVLWTIWFLFSVLRSIRFTIFLVLKIIKALLW.

Residues 1-12 (MTHTNEHDHKAE) are compositionally biased toward basic and acidic residues. Residues 1–26 (MTHTNEHDHKAEQQQNGRGDTTTETV) are disordered. Residues 13–26 (QQQNGRGDTTTETV) are compositionally biased toward polar residues. Serine 85 carries the phosphoserine modification. Over residues 211 to 222 (YSPSNESSGSSS) the composition is skewed to low complexity. 3 disordered regions span residues 211–287 (YSPS…PEAQ), 325–437 (AKGS…TETY), and 465–511 (KTSN…PVGL). Basic residues predominate over residues 223–243 (SRRHHGHHIHPRRHLQHHSRV). Residues 244-257 (RTANSVHSNTQSLT) are compositionally biased toward polar residues. At threonine 263 the chain carries Phosphothreonine. Residues 276-287 (MITKIATTPEAQ) show a composition bias toward polar residues. The span at 403-417 (SNGGTSRRSSNNGES) shows a compositional bias: low complexity. Residues 418–437 (ISTNSSKSSMGITFGNTETY) are compositionally biased toward polar residues. The segment covering 471 to 485 (LRAEGEQALESDKEL) has biased composition (basic and acidic residues). A phosphoserine mark is found at serine 481 and serine 491. Residue tyrosine 493 is modified to Phosphotyrosine. Residues 655 to 675 (RLLEFGIVLVLWTIWFLFSVL) traverse the membrane as a helical segment.

It is found in the membrane. The protein resides in the cytoplasm. This chain is Maintenance of telomere capping protein 4 (MTC4), found in Saccharomyces cerevisiae (strain ATCC 204508 / S288c) (Baker's yeast).